Consider the following 173-residue polypeptide: Mesogenin-1 (173 aa).

Polar residues predominate over residues 39-68 (ESYSLSQTPSPQSVSPAASYESTYSSSPHT). 2 disordered regions span residues 39-69 (ESYS…PHTG) and 96-117 (TKKD…ASER). Residues 99-114 (DHGHKTSMTTHRRRKA) are compositionally biased toward basic residues. Residues 109–163 (HRRRKASEREKLRMRAIAEALHTLRNNLPPMYSQGRQPLTKIQTLKCTINYISEL) form the bHLH domain.

It localises to the nucleus. Its function is as follows. Involved in specifying the paraxial, but not dorsal, mesoderm. May regulate the expression of T-box transcription factors required for mesoderm formation and differentiation, such as brachyury T, wnt8, vegt and eomes. This is Mesogenin-1 (msgn1) from Xenopus laevis (African clawed frog).